The sequence spans 462 residues: Argininosuccinate lyase (462 aa).

This sequence belongs to the lyase 1 family. Argininosuccinate lyase subfamily.

Its subcellular location is the cytoplasm. The catalysed reaction is 2-(N(omega)-L-arginino)succinate = fumarate + L-arginine. Its pathway is amino-acid biosynthesis; L-arginine biosynthesis; L-arginine from L-ornithine and carbamoyl phosphate: step 3/3. In Rippkaea orientalis (strain PCC 8801 / RF-1) (Cyanothece sp. (strain PCC 8801)), this protein is Argininosuccinate lyase.